Consider the following 493-residue polypeptide: Chitinase 1 (493 aa).

Residues 1–20 form the signal peptide; the sequence is MISCNILGITIAAFITSTLA. In terms of domain architecture, GH18 spans 27–318; the sequence is VNVMYYWGQN…HGSSAALGQA (292 aa). Catalysis depends on glutamate 164, which acts as the Proton donor.

The protein belongs to the glycosyl hydrolase 18 family. Chitinase class III subfamily.

It catalyses the reaction Random endo-hydrolysis of N-acetyl-beta-D-glucosaminide (1-&gt;4)-beta-linkages in chitin and chitodextrins.. The chain is Chitinase 1 (CHI1) from Rhizopus niveus.